A 449-amino-acid chain; its full sequence is Jacalin-related lectin 20 (449 aa).

Disordered regions lie at residues 1 to 20 (MAQR…DDGA) and 294 to 314 (APPI…GDGG). At Ala-2 the chain carries N-acetylalanine. 3 Jacalin-type lectin domains span residues 2–144 (AQRL…YFTP), 147–294 (PIKQ…HFGA), and 303–446 (TEKL…TVAP).

The protein belongs to the jacalin lectin family.

The protein is Jacalin-related lectin 20 (JAL20) of Arabidopsis thaliana (Mouse-ear cress).